We begin with the raw amino-acid sequence, 442 residues long: Dol-P-Man:Man(5)GlcNAc(2)-PP-Dol alpha-1,3-mannosyltransferase (442 aa).

Over 1–34 (MAAPSSRPESNPPLYKQALDFALDVANGRHALSK) the chain is Lumenal. Residues 35–55 (LIPPALFLVDALLCGLIIWKV) form a helical membrane-spanning segment. Topologically, residues 56 to 84 (PYTEIDWAAYMEQVSQILSGERDYTKVRG) are cytoplasmic. Residues 85–105 (GTGPLVYPAAHVYIYTGLYHL) traverse the membrane as a helical segment. Over 106 to 111 (TDEGRN) the chain is Lumenal. Residues 112–132 (ILLAQQLFAGLYMVTLAVVMG) form a helical membrane-spanning segment. At 133–155 (CYWQAKAPPYLFPLLTLSKRLHS) the chain is on the cytoplasmic side. A helical transmembrane segment spans residues 156-176 (IFVLRCFNDCFAVLFLWLAIF). At 177–198 (FFQRRNWQAGALLYTLGLGVKM) the chain is on the lumenal side. A helical membrane pass occupies residues 199–219 (TLLLSLPAVGIVLFLGSGSFV). Thr-220 is a topological domain (cytoplasmic). A helical membrane pass occupies residues 221-241 (TLQLVATMGLVQILIGVPFLA). Residues 242-272 (HYPTEYLSRAFELSRQFFFKWTVNWRFVGEE) lie on the Lumenal side of the membrane. The helical transmembrane segment at 273–293 (IFLSKGFALTLLALHVLVLGI) threads the bilayer. Residues 294–333 (FITTRWIKPARKSLVQLISPVLLAGKPPLTVPEHRAAARD) lie on the Cytoplasmic side of the membrane. Residues 334 to 354 (VTPRYIMTTILSANAVGLLFA) traverse the membrane as a helical segment. Residues 355 to 376 (RSLHYQFYAYVAWSTPFLLWRA) lie on the Lumenal side of the membrane. A helical transmembrane segment spans residues 377-397 (GLHPVLVYLLWAVHEWAWNVF). Residues 398–401 (PSTP) are Cytoplasmic-facing. A helical transmembrane segment spans residues 402–422 (ASSAVVVGVLGVTVAGVWFGA). Over 423 to 442 (REEWEPGMKSSSKKEEAAMR) the chain is Lumenal.

This sequence belongs to the glycosyltransferase ALG3 family.

The protein resides in the endoplasmic reticulum membrane. It carries out the reaction an alpha-D-Man-(1-&gt;2)-alpha-D-Man-(1-&gt;2)-alpha-D-Man-(1-&gt;3)-[alpha-D-Man-(1-&gt;6)]-beta-D-Man-(1-&gt;4)-beta-D-GlcNAc-(1-&gt;4)-alpha-D-GlcNAc-diphospho-di-trans,poly-cis-dolichol + a di-trans,poly-cis-dolichyl beta-D-mannosyl phosphate = an alpha-D-Man-(1-&gt;2)-alpha-D-Man-(1-&gt;2)-alpha-D-Man-(1-&gt;3)-[alpha-D-Man-(1-&gt;3)-alpha-D-Man-(1-&gt;6)]-beta-D-Man-(1-&gt;4)-beta-D-GlcNAc-(1-&gt;4)-alpha-D-GlcNAc-diphospho-di-trans,poly-cis-dolichol + a di-trans,poly-cis-dolichyl phosphate + H(+). Its pathway is protein modification; protein glycosylation. Functionally, dol-P-Man:Man(5)GlcNAc(2)-PP-Dol alpha-1,3-mannosyltransferase that operates in the biosynthetic pathway of dolichol-linked oligosaccharides, the glycan precursors employed in protein asparagine (N)-glycosylation. The assembly of dolichol-linked oligosaccharides begins on the cytosolic side of the endoplasmic reticulum membrane and finishes in its lumen. The sequential addition of sugars to dolichol pyrophosphate produces dolichol-linked oligosaccharides containing fourteen sugars, including two GlcNAcs, nine mannoses and three glucoses. Once assembled, the oligosaccharide is transferred from the lipid to nascent proteins by oligosaccharyltransferases. In the lumen of the endoplasmic reticulum, adds the first dolichyl beta-D-mannosyl phosphate derived mannose in an alpha-1,3 linkage to Man(5)GlcNAc(2)-PP-dolichol to produce Man(6)GlcNAc(2)-PP-dolichol. This Neurospora crassa (strain ATCC 24698 / 74-OR23-1A / CBS 708.71 / DSM 1257 / FGSC 987) protein is Dol-P-Man:Man(5)GlcNAc(2)-PP-Dol alpha-1,3-mannosyltransferase (alg-3).